A 275-amino-acid chain; its full sequence is 2,3,4,5-tetrahydropyridine-2,6-dicarboxylate N-succinyltransferase (275 aa).

2 residues coordinate substrate: Arg106 and Asp143.

The protein belongs to the transferase hexapeptide repeat family. Homotrimer.

Its subcellular location is the cytoplasm. The enzyme catalyses (S)-2,3,4,5-tetrahydrodipicolinate + succinyl-CoA + H2O = (S)-2-succinylamino-6-oxoheptanedioate + CoA. It participates in amino-acid biosynthesis; L-lysine biosynthesis via DAP pathway; LL-2,6-diaminopimelate from (S)-tetrahydrodipicolinate (succinylase route): step 1/3. In Rickettsia bellii (strain RML369-C), this protein is 2,3,4,5-tetrahydropyridine-2,6-dicarboxylate N-succinyltransferase.